The sequence spans 166 residues: NAD(P)H-quinone oxidoreductase subunit I, chloroplastic (166 aa).

4Fe-4S ferredoxin-type domains follow at residues glycine 55–glutamine 84 and valine 95–glutamate 124. [4Fe-4S] cluster contacts are provided by cysteine 64, cysteine 67, cysteine 70, cysteine 74, cysteine 104, cysteine 107, cysteine 110, and cysteine 114.

Belongs to the complex I 23 kDa subunit family. In terms of assembly, NDH is composed of at least 16 different subunits, 5 of which are encoded in the nucleus. It depends on [4Fe-4S] cluster as a cofactor.

The protein resides in the plastid. It is found in the chloroplast thylakoid membrane. The enzyme catalyses a plastoquinone + NADH + (n+1) H(+)(in) = a plastoquinol + NAD(+) + n H(+)(out). The catalysed reaction is a plastoquinone + NADPH + (n+1) H(+)(in) = a plastoquinol + NADP(+) + n H(+)(out). NDH shuttles electrons from NAD(P)H:plastoquinone, via FMN and iron-sulfur (Fe-S) centers, to quinones in the photosynthetic chain and possibly in a chloroplast respiratory chain. The immediate electron acceptor for the enzyme in this species is believed to be plastoquinone. Couples the redox reaction to proton translocation, and thus conserves the redox energy in a proton gradient. This is NAD(P)H-quinone oxidoreductase subunit I, chloroplastic from Coreopsis petrophiloides (Tickseed).